Here is a 110-residue protein sequence, read N- to C-terminus: Parvalbumin alpha (110 aa).

EF-hand domains lie at 39–74 and 78–110; these read KNAK…FAPE and LSEK…VANS. Residues Asp-52, Asp-54, Ser-56, Phe-58, Glu-60, Glu-63, Asp-91, Asp-93, Asp-95, Lys-97, and Glu-102 each coordinate Ca(2+).

This sequence belongs to the parvalbumin family.

Its function is as follows. In muscle, parvalbumin is thought to be involved in relaxation after contraction. It binds two calcium ions. This chain is Parvalbumin alpha, found in Callorhinchus milii (Ghost shark).